An 83-amino-acid chain; its full sequence is Protein L83L (83 aa).

A compositionally biased stretch (polar residues) spans 1 to 10; that stretch reads MDTSLKNNDG. Residues 1–25 are disordered; sequence MDTSLKNNDGASEADNKNYQDYKDE. Positions 14 to 25 are enriched in basic and acidic residues; the sequence is ADNKNYQDYKDE.

Belongs to the asfivirus L83L family. As to quaternary structure, interacts with host IL1B.

It localises to the host cytoplasm. Functionally, may subvert the host innate immune response by interacting with host IL1B and interfering with its function. This is Protein L83L from Ornithodoros (relapsing fever ticks).